We begin with the raw amino-acid sequence, 82 residues long: NAD(P)H-quinone oxidoreductase subunit O, organellar chromatophore (82 aa).

This sequence belongs to the complex I NdhO subunit family. NDH-1 can be composed of about 15 different subunits; different subcomplexes with different compositions have been identified which probably have different functions.

It is found in the plastid. The protein localises to the organellar chromatophore thylakoid membrane. The catalysed reaction is a plastoquinone + NADH + (n+1) H(+)(in) = a plastoquinol + NAD(+) + n H(+)(out). It catalyses the reaction a plastoquinone + NADPH + (n+1) H(+)(in) = a plastoquinol + NADP(+) + n H(+)(out). Functionally, NDH-1 shuttles electrons from an unknown electron donor, via FMN and iron-sulfur (Fe-S) centers, to quinones in the respiratory and/or the photosynthetic chain. The immediate electron acceptor for the enzyme in this species is believed to be plastoquinone. Couples the redox reaction to proton translocation, and thus conserves the redox energy in a proton gradient. Cyanobacterial NDH-1 also plays a role in inorganic carbon-concentration. The sequence is that of NAD(P)H-quinone oxidoreductase subunit O, organellar chromatophore from Paulinella chromatophora.